The chain runs to 556 residues: Tripartite motif-containing protein 16 (556 aa).

Residues 1 to 60 (MAELDLIAPGPLTGVTAHPLAPLGPDPVSAIPVEKEDADPLSKSGEETQEQGHDPAELGA) are disordered. Residues 33 to 56 (VEKEDADPLSKSGEETQEQGHDPA) are compositionally biased toward basic and acidic residues. B box-type zinc fingers lie at residues 64-113 (EDQI…LTEP) and 117-156 (QDLR…STVS). Ser107 carries the phosphoserine modification. Coiled coils occupy residues 163–266 (NKEV…RLAA) and 312–332 (NLIQ…REEE). Ser195 carries the post-translational modification Phosphoserine. Residues 347-545 (YRTSKPEPRT…RIVDLGEEPE (199 aa)) enclose the B30.2/SPRY domain.

This sequence belongs to the TRIM/RBCC family. As to quaternary structure, homodimerizes via its coiled-coil domain. Heterodimerizes with MID1, TRIM24 and PML. Interacts with Galectin-3/LGALS3 in a ULK1-dependent manner; this interaction mediates autophagy of damage endomembranes. Interacts with BECN1. Interacts with ATG16L1. Interacts with p62/SQSTM and LC3B/MAP1LC3B. Phosphorylated by ULK1. Post-translationally, auto-ubiquitinates via its B-Boxes. Widely expressed. Expressed in basal keratinocytes.

It localises to the cytoplasm. It catalyses the reaction S-ubiquitinyl-[E2 ubiquitin-conjugating enzyme]-L-cysteine + [acceptor protein]-L-lysine = [E2 ubiquitin-conjugating enzyme]-L-cysteine + N(6)-ubiquitinyl-[acceptor protein]-L-lysine.. Functionally, E3 ubiquitin ligase that plays an essential role in the organization of autophagic response and ubiquitination upon lysosomal and phagosomal damages. Plays a role in the stress-induced biogenesis and degradation of protein aggresomes by regulating the p62-KEAP1-NRF2 signaling and particularly by modulating the ubiquitination levels and thus stability of NRF2. Acts as a scaffold protein and facilitates autophagic degradation of protein aggregates by interacting with p62/SQSTM, ATG16L1 and LC3B/MAP1LC3B. In turn, protects the cell against oxidative stress-induced cell death as a consequence of endomembrane damage. The protein is Tripartite motif-containing protein 16 (Trim16) of Mus musculus (Mouse).